A 530-amino-acid polypeptide reads, in one-letter code: Phosphoenolpyruvate carboxykinase (ATP) (530 aa).

Substrate contacts are provided by Arg57, Tyr193, and Lys199. Residues Lys199, His218, and 234–242 (GLSGTGKTT) contribute to the ATP site. Lys199 and His218 together coordinate Mn(2+). Residue Asp255 participates in Mn(2+) binding. The ATP site is built by Glu283, Arg320, and Thr445. Arg320 lines the substrate pocket.

The protein belongs to the phosphoenolpyruvate carboxykinase (ATP) family. Requires Mn(2+) as cofactor.

The protein resides in the cytoplasm. It catalyses the reaction oxaloacetate + ATP = phosphoenolpyruvate + ADP + CO2. It functions in the pathway carbohydrate biosynthesis; gluconeogenesis. Functionally, involved in the gluconeogenesis. Catalyzes the conversion of oxaloacetate (OAA) to phosphoenolpyruvate (PEP) through direct phosphoryl transfer between the nucleoside triphosphate and OAA. In Leptospira interrogans serogroup Icterohaemorrhagiae serovar copenhageni (strain Fiocruz L1-130), this protein is Phosphoenolpyruvate carboxykinase (ATP).